Reading from the N-terminus, the 431-residue chain is 23S rRNA (uracil(1939)-C(5))-methyltransferase RlmD (431 aa).

Positions 10–68 (RVTTRQIITVKVNDLDSFGQGVARHNGKALFIPGLLPEESAEVIITEDKKQFARARVSR) constitute a TRAM domain. [4Fe-4S] cluster-binding residues include cysteine 81, cysteine 87, cysteine 90, and cysteine 161. Residues glutamine 264, phenylalanine 293, asparagine 298, glutamate 314, asparagine 341, and aspartate 362 each contribute to the S-adenosyl-L-methionine site. Residue cysteine 388 is the Nucleophile of the active site.

It belongs to the class I-like SAM-binding methyltransferase superfamily. RNA M5U methyltransferase family. RlmD subfamily.

The catalysed reaction is uridine(1939) in 23S rRNA + S-adenosyl-L-methionine = 5-methyluridine(1939) in 23S rRNA + S-adenosyl-L-homocysteine + H(+). Its function is as follows. Catalyzes the formation of 5-methyl-uridine at position 1939 (m5U1939) in 23S rRNA. This Salmonella paratyphi A (strain ATCC 9150 / SARB42) protein is 23S rRNA (uracil(1939)-C(5))-methyltransferase RlmD.